The primary structure comprises 1589 residues: Mediator of RNA polymerase II transcription subunit 23 (1589 aa).

The tract at residues tyrosine 1381–glutamine 1499 is disordered. The span at threonine 1392 to glutamate 1410 shows a compositional bias: basic and acidic residues. Residues leucine 1457–methionine 1470 are compositionally biased toward low complexity.

This sequence belongs to the Mediator complex subunit 23 family. Component of the Mediator complex.

The protein resides in the nucleus. Functionally, component of the Mediator complex, a coactivator involved in the regulated transcription of nearly all RNA polymerase II-dependent genes. Mediator functions as a bridge to convey information from gene-specific regulatory proteins to the basal RNA polymerase II transcription machinery. Mediator is recruited to promoters by direct interactions with regulatory proteins and serves as a scaffold for the assembly of a functional preinitiation complex with RNA polymerase II and the general transcription factors. In Caenorhabditis briggsae, this protein is Mediator of RNA polymerase II transcription subunit 23 (sur-2).